Here is a 243-residue protein sequence, read N- to C-terminus: Tryptophan synthase alpha chain (243 aa).

Residues Glu-32 and Asp-43 each act as proton acceptor in the active site.

It belongs to the TrpA family. As to quaternary structure, tetramer of two alpha and two beta chains.

It localises to the plastid. The protein localises to the chloroplast. The catalysed reaction is (1S,2R)-1-C-(indol-3-yl)glycerol 3-phosphate + L-serine = D-glyceraldehyde 3-phosphate + L-tryptophan + H2O. The protein operates within amino-acid biosynthesis; L-tryptophan biosynthesis; L-tryptophan from chorismate: step 5/5. The alpha subunit is responsible for the aldol cleavage of indoleglycerol phosphate to indole and glyceraldehyde 3-phosphate. This chain is Tryptophan synthase alpha chain, found in Cyanidioschyzon merolae (strain NIES-3377 / 10D) (Unicellular red alga).